The chain runs to 456 residues: Enolase (456 aa).

Gln-177 provides a ligand contact to (2R)-2-phosphoglycerate. The active-site Proton donor is the Glu-219. Residues Asp-256, Glu-310, and Asp-337 each contribute to the Mg(2+) site. Residues Lys-362, Arg-391, Ser-392, and Lys-413 each coordinate (2R)-2-phosphoglycerate. Lys-362 functions as the Proton acceptor in the catalytic mechanism.

This sequence belongs to the enolase family. Homodimer. The cofactor is Mg(2+).

The protein localises to the cytoplasm. The protein resides in the secreted. It localises to the cell surface. It carries out the reaction (2R)-2-phosphoglycerate = phosphoenolpyruvate + H2O. It participates in carbohydrate degradation; glycolysis; pyruvate from D-glyceraldehyde 3-phosphate: step 4/5. Its function is as follows. Catalyzes the reversible conversion of 2-phosphoglycerate (2-PG) into phosphoenolpyruvate (PEP). It is essential for the degradation of carbohydrates via glycolysis. Functionally, 'Moonlights' as a plasminogen receptor. Binds plasminogen, but no fibronectin binding was observed. Plasminogen binding increases bacterial adherence to host cells; plasmin activity leads to degradation of host extracellular matrix proteins, facilitating bacterial dissemination and disease spread. The chain is Enolase from Mycoplasma pneumoniae (strain ATCC 29342 / M129 / Subtype 1) (Mycoplasmoides pneumoniae).